Here is a 205-residue protein sequence, read N- to C-terminus: Arginine exporter protein ArgO (205 aa).

6 helical membrane passes run 1–21 (MLAV…PLGP), 42–62 (LCAL…SALL), 67–87 (LLLA…GWGA), 111–131 (ILVT…DTFV), 147–167 (WFAL…AFLA), and 185–205 (LFVG…GFGL).

This sequence belongs to the LysE/ArgO transporter (TC 2.A.75) family.

The protein resides in the cell inner membrane. It catalyses the reaction L-arginine(in) = L-arginine(out). Functionally, involved in the export of arginine. Important to control the intracellular level of arginine and the correct balance between arginine and lysine. The chain is Arginine exporter protein ArgO from Yersinia pseudotuberculosis serotype O:3 (strain YPIII).